The chain runs to 277 residues: Urease accessory protein UreD (277 aa).

Belongs to the UreD family. In terms of assembly, ureD, UreF and UreG form a complex that acts as a GTP-hydrolysis-dependent molecular chaperone, activating the urease apoprotein by helping to assemble the nickel containing metallocenter of UreC. The UreE protein probably delivers the nickel.

The protein localises to the cytoplasm. Required for maturation of urease via the functional incorporation of the urease nickel metallocenter. This Sinorhizobium medicae (strain WSM419) (Ensifer medicae) protein is Urease accessory protein UreD.